The following is a 122-amino-acid chain: Large ribosomal subunit protein uL14 (122 aa).

This sequence belongs to the universal ribosomal protein uL14 family. As to quaternary structure, part of the 50S ribosomal subunit. Forms a cluster with proteins L3 and L19. In the 70S ribosome, L14 and L19 interact and together make contacts with the 16S rRNA in bridges B5 and B8.

Its function is as follows. Binds to 23S rRNA. Forms part of two intersubunit bridges in the 70S ribosome. This is Large ribosomal subunit protein uL14 from Dehalococcoides mccartyi (strain ATCC BAA-2266 / KCTC 15142 / 195) (Dehalococcoides ethenogenes (strain 195)).